A 41-amino-acid polypeptide reads, in one-letter code: Cytochrome b559 subunit beta (41 aa).

Residues 16–32 (WLAIHALAVPTVFFLGS) traverse the membrane as a helical segment. Residue His20 coordinates heme.

This sequence belongs to the PsbE/PsbF family. Heterodimer of an alpha subunit and a beta subunit. PSII is composed of 1 copy each of membrane proteins PsbA, PsbB, PsbC, PsbD, PsbE, PsbF, PsbH, PsbI, PsbJ, PsbK, PsbL, PsbM, PsbT, PsbX, PsbY, PsbZ, Psb30/Ycf12, at least 3 peripheral proteins of the oxygen-evolving complex and a large number of cofactors. It forms dimeric complexes. The cofactor is heme b.

Its subcellular location is the plastid. The protein resides in the chloroplast thylakoid membrane. Functionally, this b-type cytochrome is tightly associated with the reaction center of photosystem II (PSII). PSII is a light-driven water:plastoquinone oxidoreductase that uses light energy to abstract electrons from H(2)O, generating O(2) and a proton gradient subsequently used for ATP formation. It consists of a core antenna complex that captures photons, and an electron transfer chain that converts photonic excitation into a charge separation. This is Cytochrome b559 subunit beta from Oltmannsiellopsis viridis (Marine flagellate).